The chain runs to 390 residues: MATLNPRDVVIVDGVRSAMGKSKNGMFRNVRADSLSAELVRALIARNQFDVNEVEDLIWGCVNQTLEQGMNIGRNIGLLAGLPKTVAGQTVNRLCGSSMQAIHTAAAQIATNQGDIFIIGGVEHMGHVGMMHGIDLNPEASKHYAKASNMMGLTAEMLGRMNGITREEQDTFGVESHRRAWAATQEGRFKNEIIGVEGHDANGFKILCDIDEVIRPDANLEAFKALKPVFDPKGGSVTAATSSALSDGASAMLLMSAERAQALGLKPRAVIRSMAVAGCDAAIMGYGPVPATQKALKRAGLSIADIQTVELNEAFAAQGLSVLKGLGLYDKQDIVNLNGGAIALGHPLGCSGARITTTLLNVMEQQDTQIGLATMCIGLGQGIATVIERV.

The Acyl-thioester intermediate role is filled by Cys-95. Residues His-346 and Cys-376 each act as proton acceptor in the active site.

It belongs to the thiolase-like superfamily. Thiolase family. In terms of assembly, heterotetramer of two alpha chains (FadB) and two beta chains (FadA).

The protein localises to the cytoplasm. It carries out the reaction an acyl-CoA + acetyl-CoA = a 3-oxoacyl-CoA + CoA. Its pathway is lipid metabolism; fatty acid beta-oxidation. In terms of biological role, catalyzes the final step of fatty acid oxidation in which acetyl-CoA is released and the CoA ester of a fatty acid two carbons shorter is formed. The chain is 3-ketoacyl-CoA thiolase from Acinetobacter baumannii (strain ATCC 17978 / DSM 105126 / CIP 53.77 / LMG 1025 / NCDC KC755 / 5377).